A 365-amino-acid chain; its full sequence is Tubulin-like protein CetZ (365 aa).

GTP is bound by residues 10–14 (QCGTK), 103–105 (GTG), Glu136, Asn163, and Asn181.

The protein belongs to the CetZ family.

The protein resides in the cytoplasm. Involved in cell shape control. This Pyrococcus horikoshii (strain ATCC 700860 / DSM 12428 / JCM 9974 / NBRC 100139 / OT-3) protein is Tubulin-like protein CetZ.